A 161-amino-acid chain; its full sequence is Protein ZMO0507 (161 aa).

The protein belongs to the free Met sulfoxide reductase family.

This Zymomonas mobilis subsp. mobilis (strain ATCC 31821 / ZM4 / CP4) protein is Protein ZMO0507.